We begin with the raw amino-acid sequence, 242 residues long: Biosynthetic peptidoglycan transglycosylase (242 aa).

Residues 15–35 (FLLLLMVVLAVFWGGGIALFS) form a helical membrane-spanning segment.

This sequence belongs to the glycosyltransferase 51 family.

It is found in the cell inner membrane. The enzyme catalyses [GlcNAc-(1-&gt;4)-Mur2Ac(oyl-L-Ala-gamma-D-Glu-L-Lys-D-Ala-D-Ala)](n)-di-trans,octa-cis-undecaprenyl diphosphate + beta-D-GlcNAc-(1-&gt;4)-Mur2Ac(oyl-L-Ala-gamma-D-Glu-L-Lys-D-Ala-D-Ala)-di-trans,octa-cis-undecaprenyl diphosphate = [GlcNAc-(1-&gt;4)-Mur2Ac(oyl-L-Ala-gamma-D-Glu-L-Lys-D-Ala-D-Ala)](n+1)-di-trans,octa-cis-undecaprenyl diphosphate + di-trans,octa-cis-undecaprenyl diphosphate + H(+). It participates in cell wall biogenesis; peptidoglycan biosynthesis. Functionally, peptidoglycan polymerase that catalyzes glycan chain elongation from lipid-linked precursors. The protein is Biosynthetic peptidoglycan transglycosylase of Shigella sonnei (strain Ss046).